A 132-amino-acid polypeptide reads, in one-letter code: Sec-independent protein translocase protein TatB (132 aa).

A helical transmembrane segment spans residues 2–22 (FDGIGFMELLLIGILGLVVLG). Residues 86–132 (LKSAAQSVNRPYKVEDISPASSSAPVDPAPTETKTAETSANSEKPNG) are disordered. Residues 103 to 115 (SPASSSAPVDPAP) show a composition bias toward low complexity. Positions 117 to 132 (ETKTAETSANSEKPNG) are enriched in polar residues.

This sequence belongs to the TatB family. As to quaternary structure, the Tat system comprises two distinct complexes: a TatABC complex, containing multiple copies of TatA, TatB and TatC subunits, and a separate TatA complex, containing only TatA subunits. Substrates initially bind to the TatABC complex, which probably triggers association of the separate TatA complex to form the active translocon.

It is found in the cell inner membrane. Functionally, part of the twin-arginine translocation (Tat) system that transports large folded proteins containing a characteristic twin-arginine motif in their signal peptide across membranes. Together with TatC, TatB is part of a receptor directly interacting with Tat signal peptides. TatB may form an oligomeric binding site that transiently accommodates folded Tat precursor proteins before their translocation. The protein is Sec-independent protein translocase protein TatB of Shewanella sediminis (strain HAW-EB3).